The chain runs to 402 residues: uncharacterized protein (402 aa).

A run of 9 helical transmembrane segments spans residues 13–33 (IGVLDVLRGMAIFGILFVNLA), 68–88 (FFIQTKCILLFSFLFGFGMVV), 108–128 (LMALLLFGTIHAFLIWDGDIL), 149–169 (LLIWAVSLYLLFSIPFMLTSF), 223–243 (LNYFFASIPYFSMFLLGAAAA), 261–281 (LWMAGLVIGIGAQVLYSVTDK), 283–303 (ICLLIGAPFLMFFYVTTVVYL), 327–347 (YLMQSIVCTWIFYHYGLGLYG), and 353–373 (AGVLITIAVCAVQMVFSHLWL).

It localises to the cell membrane. Involved in transport. This is an uncharacterized protein from Bacillus subtilis (strain 168).